The following is a 189-amino-acid chain: Elongation factor P (189 aa).

It belongs to the elongation factor P family.

The protein resides in the cytoplasm. It functions in the pathway protein biosynthesis; polypeptide chain elongation. Functionally, involved in peptide bond synthesis. Stimulates efficient translation and peptide-bond synthesis on native or reconstituted 70S ribosomes in vitro. Probably functions indirectly by altering the affinity of the ribosome for aminoacyl-tRNA, thus increasing their reactivity as acceptors for peptidyl transferase. In Phytoplasma australiense, this protein is Elongation factor P.